A 426-amino-acid chain; its full sequence is D-tagatose-1,6-bisphosphate aldolase subunit KbaZ (426 aa).

It belongs to the GatZ/KbaZ family. KbaZ subfamily. Forms a complex with KbaY.

It functions in the pathway carbohydrate metabolism; D-tagatose 6-phosphate degradation; D-glyceraldehyde 3-phosphate and glycerone phosphate from D-tagatose 6-phosphate: step 2/2. In terms of biological role, component of the tagatose-1,6-bisphosphate aldolase KbaYZ that is required for full activity and stability of the Y subunit. Could have a chaperone-like function for the proper and stable folding of KbaY. When expressed alone, KbaZ does not show any aldolase activity. The sequence is that of D-tagatose-1,6-bisphosphate aldolase subunit KbaZ from Escherichia coli (strain K12 / MC4100 / BW2952).